The following is a 338-amino-acid chain: Adenylosuccinate synthetase (338 aa).

GTP is bound by residues 12 to 18 and 42 to 44; these read GDEGKGK and GHT. Asp13 functions as the Proton acceptor in the catalytic mechanism. 2 residues coordinate Mg(2+): Asp13 and Gly42. Residues 13 to 16, 40 to 43, Thr127, Arg141, Gln179, Thr194, and Arg256 contribute to the IMP site; these read DEGK and NAGH. His43 (proton donor) is an active-site residue. Residue 252 to 258 participates in substrate binding; it reads TVTGRRR. GTP contacts are provided by residues Arg258, 284–286, and 324–326; these read CLD and STG.

It belongs to the adenylosuccinate synthetase family. Homodimer. It depends on Mg(2+) as a cofactor.

It is found in the cytoplasm. It carries out the reaction IMP + L-aspartate + GTP = N(6)-(1,2-dicarboxyethyl)-AMP + GDP + phosphate + 2 H(+). It functions in the pathway purine metabolism; AMP biosynthesis via de novo pathway; AMP from IMP: step 1/2. Plays an important role in the de novo pathway of purine nucleotide biosynthesis. Catalyzes the first committed step in the biosynthesis of AMP from IMP. This is Adenylosuccinate synthetase from Methanococcus vannielii (strain ATCC 35089 / DSM 1224 / JCM 13029 / OCM 148 / SB).